A 153-amino-acid polypeptide reads, in one-letter code: Glucose-6-phosphate 1-dehydrogenase (153 aa).

2 residues coordinate NADP(+): R21 and K120. Residue K120 participates in D-glucose 6-phosphate binding.

This sequence belongs to the glucose-6-phosphate dehydrogenase family.

It localises to the cytoplasm. Its subcellular location is the cytosol. The enzyme catalyses D-glucose 6-phosphate + NADP(+) = 6-phospho-D-glucono-1,5-lactone + NADPH + H(+). Its pathway is carbohydrate degradation; pentose phosphate pathway; D-ribulose 5-phosphate from D-glucose 6-phosphate (oxidative stage): step 1/3. Functionally, cytosolic glucose-6-phosphate dehydrogenase that catalyzes the first and rate-limiting step of the oxidative branch within the pentose phosphate pathway/shunt, an alternative route to glycolysis for the dissimilation of carbohydrates and a major source of reducing power and metabolic intermediates for fatty acid and nucleic acid biosynthetic processes. This chain is Glucose-6-phosphate 1-dehydrogenase (ZW), found in Sarcophaga bullata (Grey flesh fly).